Reading from the N-terminus, the 93-residue chain is Secretoglobin family 3A member 2 (93 aa).

An N-terminal signal peptide occupies residues 1–21; sequence MKLVTIFLLVTISLCSYSATA.

It belongs to the secretoglobin family. UGRP subfamily. As to quaternary structure, homodimer; disulfide-linked. Monomer. Interacts with APOA1. Highly expressed in lung and trachea. Detected throughout the airway epithelium in lung, with slightly higher expression in large airways. Found in lung submucosal gland acinus where it localizes to serous-like cells. Probably expressed in club cells of the bronchioles. Not detected in other tissues tested.

It localises to the secreted. Its function is as follows. Secreted cytokine-like protein. Binds to the scavenger receptor MARCO. Can also bind to pathogens including the Gram-positive bacterium L.monocytogenes, the Gram-negative bacterium P.aeruginosa, and yeast. Strongly inhibits phospholipase A2 (PLA2G1B) activity. Seems to have anti-inflammatory effects in respiratory epithelium. Also has anti-fibrotic activity in lung. May play a role in fetal lung development and maturation. Promotes branching morphogenesis during early stages of lung development. In the pituitary, may inhibit production of follicle-stimulating hormone (FSH) and luteinizing hormone (LH). The protein is Secretoglobin family 3A member 2 (SCGB3A2) of Homo sapiens (Human).